The primary structure comprises 100 residues: Urease subunit gamma (100 aa).

The protein belongs to the urease gamma subunit family. Heterotrimer of UreA (gamma), UreB (beta) and UreC (alpha) subunits. Three heterotrimers associate to form the active enzyme.

The protein resides in the cytoplasm. It catalyses the reaction urea + 2 H2O + H(+) = hydrogencarbonate + 2 NH4(+). It participates in nitrogen metabolism; urea degradation; CO(2) and NH(3) from urea (urease route): step 1/1. The chain is Urease subunit gamma from Rhodopseudomonas palustris (strain BisA53).